A 313-amino-acid chain; its full sequence is ADP-L-glycero-D-manno-heptose-6-epimerase (313 aa).

NADP(+) is bound by residues 10–11 (MI), 31–32 (DN), lysine 38, lysine 53, 75–79 (EGACS), and asparagine 92. Tyrosine 139 serves as the catalytic Proton acceptor. Lysine 143 is a binding site for NADP(+). A substrate-binding site is contributed by asparagine 174. 2 residues coordinate NADP(+): valine 175 and lysine 183. Residue lysine 183 is the Proton acceptor of the active site. Substrate contacts are provided by residues serine 185, histidine 192, 206–209 (FEGS), arginine 214, and tyrosine 277.

Belongs to the NAD(P)-dependent epimerase/dehydratase family. HldD subfamily. In terms of assembly, homopentamer. The cofactor is NADP(+).

The enzyme catalyses ADP-D-glycero-beta-D-manno-heptose = ADP-L-glycero-beta-D-manno-heptose. The protein operates within nucleotide-sugar biosynthesis; ADP-L-glycero-beta-D-manno-heptose biosynthesis; ADP-L-glycero-beta-D-manno-heptose from D-glycero-beta-D-manno-heptose 7-phosphate: step 4/4. Functionally, catalyzes the interconversion between ADP-D-glycero-beta-D-manno-heptose and ADP-L-glycero-beta-D-manno-heptose via an epimerization at carbon 6 of the heptose. The protein is ADP-L-glycero-D-manno-heptose-6-epimerase of Aliivibrio fischeri (strain MJ11) (Vibrio fischeri).